The primary structure comprises 166 residues: MNQLQQLQNPGESPPVHPFVAPLSYLLGTWRGQGEGEYPTIPSFRYGEEIRFSHSGKPVIAYTQKTWKLESGAPMHAESGYFRPRPDGSIEVVIAQSTGLVEVQKGTYNVDEQSIKLKSDLVGNASKVKEISREFELVDGKLSYVVRMSTTTNPLQPHLKAILDKL.

Residues 28-34 (GTWRGQG) carry the GXWXGXG motif. 2 residues coordinate heme b: Thr40 and His158.

The protein belongs to the nitrobindin family. Homodimer. Heme b serves as cofactor.

The protein localises to the cytoplasm. It catalyses the reaction peroxynitrite = nitrate. It functions in the pathway nitrogen metabolism. Functionally, heme-binding protein able to scavenge peroxynitrite and to protect free L-tyrosine against peroxynitrite-mediated nitration, by acting as a peroxynitrite isomerase that converts peroxynitrite to nitrate. Therefore, this protein likely plays a role in peroxynitrite sensing and in the detoxification of reactive nitrogen and oxygen species (RNS and ROS, respectively). Is able to bind nitric oxide (NO) in vitro, but may act as a sensor of peroxynitrite levels in vivo. This is Peroxynitrite isomerase Rv2717c from Arabidopsis thaliana (Mouse-ear cress).